The chain runs to 258 residues: Small ribosomal subunit protein uS2 (258 aa).

Belongs to the universal ribosomal protein uS2 family.

The chain is Small ribosomal subunit protein uS2 from Streptococcus suis (strain 98HAH33).